The chain runs to 937 residues: Isoleucine--tRNA ligase (937 aa).

The 'HIGH' region motif lies at 58–68; it reads PYANGSIHIGH. Glu-561 lines the L-isoleucyl-5'-AMP pocket. A 'KMSKS' region motif is present at residues 602–606; it reads KMSKS. Residue Lys-605 participates in ATP binding. The Zn(2+) site is built by Cys-900, Cys-903, Cys-920, and Cys-923.

It belongs to the class-I aminoacyl-tRNA synthetase family. IleS type 1 subfamily. In terms of assembly, monomer. Requires Zn(2+) as cofactor.

The protein localises to the cytoplasm. The enzyme catalyses tRNA(Ile) + L-isoleucine + ATP = L-isoleucyl-tRNA(Ile) + AMP + diphosphate. Its function is as follows. Catalyzes the attachment of isoleucine to tRNA(Ile). As IleRS can inadvertently accommodate and process structurally similar amino acids such as valine, to avoid such errors it has two additional distinct tRNA(Ile)-dependent editing activities. One activity is designated as 'pretransfer' editing and involves the hydrolysis of activated Val-AMP. The other activity is designated 'posttransfer' editing and involves deacylation of mischarged Val-tRNA(Ile). This Pectobacterium atrosepticum (strain SCRI 1043 / ATCC BAA-672) (Erwinia carotovora subsp. atroseptica) protein is Isoleucine--tRNA ligase.